The sequence spans 228 residues: Ribosomal RNA small subunit methyltransferase G (228 aa).

Residues glycine 92, phenylalanine 97, 115–117 (EAT), 143–144 (AE), and arginine 156 contribute to the S-adenosyl-L-methionine site.

This sequence belongs to the methyltransferase superfamily. RNA methyltransferase RsmG family.

The protein localises to the cytoplasm. Functionally, specifically methylates the N7 position of a guanine in 16S rRNA. The polypeptide is Ribosomal RNA small subunit methyltransferase G (Thermosynechococcus vestitus (strain NIES-2133 / IAM M-273 / BP-1)).